We begin with the raw amino-acid sequence, 739 residues long: Poly(A) polymerase alpha (739 aa).

Over residues 1–17 (MPFPVTTQGSQQTQPPQ) the composition is skewed to low complexity. The segment at 1-22 (MPFPVTTQGSQQTQPPQRHYGI) is disordered. Phosphoserine is present on residues Ser10 and Ser24. ATP contacts are provided by residues 100–102 (FGS), Thr109, 113–115 (DID), Asp167, Lys228, Tyr237, and 246–247 (GV). Mg(2+)-binding residues include Asp113, Asp115, and Asp167. Glycyl lysine isopeptide (Lys-Gly) (interchain with G-Cter in SUMO) cross-links involve residues Lys444, Lys445, Lys506, and Lys507. Positions 490-507 (RKQLHQLLPSHVLQKRKK) match the Nuclear localization signal 1 motif. Residues 508–643 (HSTEGVKLTA…TKVPNPIVGV (136 aa)) are ser/Thr-rich. Over residues 523–534 (LDLSMDSDNSMS) the composition is skewed to low complexity. Residues 523–725 (LDLSMDSDNS…SDIPALPANP (203 aa)) form a disordered region. Residues 535–557 (VPSPTSAMKTSPLNSSGSSQGRN) show a composition bias toward polar residues. The residue at position 537 (Ser537) is a Phosphoserine; by MAPK. Phosphoserine is present on Ser558. Polar residues predominate over residues 566-582 (ASVTSIQASEVSVPQAN). Composition is skewed to low complexity over residues 583-594 (SSESPGGPSSES) and 611-622 (TVSRVVSSTRLV). N6-acetyllysine is present on residues Lys635 and Lys644. Positions 644–659 (KRTSSPNKEESPKKTK) match the Nuclear localization signal 2 motif. 2 stretches are compositionally biased toward basic and acidic residues: residues 650–660 (NKEESPKKTKT) and 676–686 (GHDKTETKEQV). The segment at 671–739 (CLALSGHDKT…KNSIKLRLNR (69 aa)) is required for interaction with NUDT21. The segment covering 691–715 (SAVQSETVPASASLLASQKTSSTDL) has biased composition (polar residues). Position 730 is an N6-acetyllysine; alternate (Lys730). Lys730 participates in a covalent cross-link: Glycyl lysine isopeptide (Lys-Gly) (interchain with G-Cter in SUMO); alternate. Residue Ser732 is modified to Phosphoserine. The residue at position 734 (Lys734) is an N6-acetyllysine; alternate. A Glycyl lysine isopeptide (Lys-Gly) (interchain with G-Cter in SUMO); alternate cross-link involves residue Lys734.

This sequence belongs to the poly(A) polymerase family. Monomer. Found in a complex with CPSF1, FIP1L1 and PAPOLA. Interacts with AHCYL1 and FIP1L1; the interaction with AHCYL1 seems to increase interaction with FIP1L1. Interacts with NUDT21; the interaction is diminished by acetylation. Interacts with KPNB1; the interaction promotes PAP nuclear import and is inhibited by acetylation of PAP. Mg(2+) is required as a cofactor. The cofactor is Mn(2+). Polysumoylated. Varying sumoylation depending on tissue- and cell-type. Highly sumoylated in bladder and NIH 3T3 cells. Sumoylation is required for nuclear localization and enhances PAP stability. Desumoylated by SENP1. Inhibits polymerase activity. Post-translationally, hyperphosphorylation on multiple CDK2 consensus and non-consensus sites in the C-terminal Ser/Thr-rich region represses PAP activity in late M-phase. Phosphorylation/dephosphorylation may regulate the interaction between PAP and CPSF. In terms of processing, acetylated in the C-terminus. Acetylation decreases interaction with NUDT21 and KPNB1, and inhibits nuclear localization through inhibiting binding to the importin alpha/beta complex. As to expression, expressed in brain, thymus, lung, kidney, bladder, testis and spleen.

The protein resides in the nucleus. It catalyses the reaction RNA(n) + ATP = RNA(n)-3'-adenine ribonucleotide + diphosphate. Polymerase that creates the 3'-poly(A) tail of mRNA's. Also required for the endoribonucleolytic cleavage reaction at some polyadenylation sites. May acquire specificity through interaction with a cleavage and polyadenylation specificity factor (CPSF) at its C-terminus. The protein is Poly(A) polymerase alpha (Papola) of Mus musculus (Mouse).